The following is a 491-amino-acid chain: MDAVELLMNVTPNETRIALVETGMLREVHIERQAKRGIVGNIYKGRVTRVLPGMQSAFVDIGLEKAAFLHAADIVSHTECVDENEQKQFKVKSISELVREGQDIVVQVVKEPLGTKGARLTTDITLPSRHLVFMPENSHVGVSQRIESEEERARLKALVEPFCDELGGFIIRTATEGASEEELRQDAEFLKRLWRKVLERKSKYPTKSKIYGEPALPQRILRDFIGTNLEKIRIDSKLCFGEVKEFTDEFMPELSDKLVLYSGNQPIFDVYGVENAIQTALDKRVNLKSGGYLIIEQTEAMTTIDINTGAFVGHRNLEETIFNTNIEATKAIAHELQLRNLGGIIIIDFIDMQTDEHRNRVLQSLCDALSKDRMKTNVNGFTQLGLVEMTRKRTRESLEHVLCDECPTCHGRGRVKTVETVCYEIMREIIRVYHLFSSEQFVVYASPAVSEYLINEESHGLLPEVEMFIGKRVKVKTEQFYNQEQFDVVVM.

Positions 40 to 129 (GNIYKGRVTR…LTTDITLPSR (90 aa)) constitute an S1 motif domain. Residues Asp305 and Asp348 each coordinate Mg(2+).

This sequence belongs to the RNase E/G family. RNase G subfamily. In terms of assembly, homodimer, in equilibrium with possible higher multimers. Requires Mg(2+) as cofactor.

The protein resides in the cytoplasm. An endonuclease that acts in the processing of the 5'-end of 16S rRNA and 23S rRNA. It prefers 5'-monophosphorylated substrates and cleaves single-stranded sites rich in A and U residues; contributes to tRNA processing and mRNA turnover. The chain is Ribonuclease G (rng) from Haemophilus influenzae (strain ATCC 51907 / DSM 11121 / KW20 / Rd).